The primary structure comprises 147 residues: Hemoglobin subunit beta (147 aa).

Position 2 is an N-acetylvaline (Val-2). The Globin domain maps to 3–147; it reads HLTGEEKAAV…VANALAHKYH (145 aa). A Phosphothreonine modification is found at Thr-13. At Ser-45 the chain carries Phosphoserine. An N6-acetyllysine modification is found at Lys-60. A heme b-binding site is contributed by His-64. Lys-83 is modified (N6-acetyllysine). A heme b-binding site is contributed by His-93. Cys-94 carries the post-translational modification S-nitrosocysteine. An N6-acetyllysine modification is found at Lys-145.

This sequence belongs to the globin family. Heterotetramer of two alpha chains and two beta chains. In terms of tissue distribution, red blood cells.

Its function is as follows. Involved in oxygen transport from the lung to the various peripheral tissues. This is Hemoglobin subunit beta (HBB) from Cheracebus torquatus (Collared titi monkey).